The sequence spans 91 residues: Defensin-like protein 220 (91 aa).

A signal peptide spans 1 to 19 (MKTIFFFITFIVLVSSCTS). 3 cysteine pairs are disulfide-bonded: cysteine 61–cysteine 78, cysteine 64–cysteine 83, and cysteine 68–cysteine 85.

The protein belongs to the DEFL family.

The protein resides in the secreted. In Arabidopsis thaliana (Mouse-ear cress), this protein is Defensin-like protein 220.